The following is a 72-amino-acid chain: Translation initiation factor IF-1 (72 aa).

One can recognise an S1-like domain in the interval 1 to 72 (MAKDDVIEVE…TRGRITYRYK (72 aa)). The residue at position 60 (Tyr-60) is a Phosphotyrosine.

Belongs to the IF-1 family. In terms of assembly, component of the 30S ribosomal translation pre-initiation complex which assembles on the 30S ribosome in the order IF-2 and IF-3, IF-1 and N-formylmethionyl-tRNA(fMet); mRNA recruitment can occur at any time during PIC assembly.

The protein localises to the cytoplasm. One of the essential components for the initiation of protein synthesis. Stabilizes the binding of IF-2 and IF-3 on the 30S subunit to which N-formylmethionyl-tRNA(fMet) subsequently binds. Helps modulate mRNA selection, yielding the 30S pre-initiation complex (PIC). Upon addition of the 50S ribosomal subunit IF-1, IF-2 and IF-3 are released leaving the mature 70S translation initiation complex. This chain is Translation initiation factor IF-1, found in Oceanobacillus iheyensis (strain DSM 14371 / CIP 107618 / JCM 11309 / KCTC 3954 / HTE831).